A 108-amino-acid chain; its full sequence is Peptidyl-prolyl cis-trans isomerase FKBP1A (108 aa).

The PPIase FKBP-type domain occupies 20–108 (GQTCVVHYTG…VFDVELLKLE (89 aa)). Lys-53 is modified (N6-acetyllysine; alternate). Lys-53 is subject to N6-succinyllysine; alternate.

The protein belongs to the FKBP-type PPIase family. FKBP1 subfamily. Interacts with TGFBR1; prevents TGFBR1 phosphorylation by TGFBR2 and stabilizes it in the inactive conformation. Interacts with ACVR1B and SMAD7. Identified in a complex composed of RYR1, PDE4D, PKA, FKBP1A and protein phosphatase 1 (PP1). Interacts directly with RYR2 and RYR3. Interacts with GLMN; rapamycin and FK506 abolish the interaction with GLMN in a dose dependent manner. Interacts directly with RYR1.

The protein localises to the cytoplasm. It is found in the cytosol. It localises to the sarcoplasmic reticulum membrane. The catalysed reaction is [protein]-peptidylproline (omega=180) = [protein]-peptidylproline (omega=0). Its activity is regulated as follows. Inhibited by both FK506 and rapamycin. Keeps in an inactive conformation TGFBR1, the TGF-beta type I serine/threonine kinase receptor, preventing TGF-beta receptor activation in absence of ligand. Recruits SMAD7 to ACVR1B which prevents the association of SMAD2 and SMAD3 with the activin receptor complex, thereby blocking the activin signal. May modulate the RYR1 calcium channel activity. PPIases accelerate the folding of proteins. It catalyzes the cis-trans isomerization of proline imidic peptide bonds in oligopeptides. The sequence is that of Peptidyl-prolyl cis-trans isomerase FKBP1A (FKBP1A) from Homo sapiens (Human).